Reading from the N-terminus, the 256-residue chain is Fructose-1,6-bisphosphatase/inositol-1-monophosphatase (256 aa).

Residues E67, D83, L85, and D86 each coordinate Mg(2+). Residues 86-88 (DGS), R170, I175, and R194 contribute to the substrate site. D201 contributes to the Mg(2+) binding site.

It belongs to the inositol monophosphatase superfamily. FBPase class 4 family. As to quaternary structure, homodimer. It depends on Mg(2+) as a cofactor.

It carries out the reaction beta-D-fructose 1,6-bisphosphate + H2O = beta-D-fructose 6-phosphate + phosphate. It catalyses the reaction a myo-inositol phosphate + H2O = myo-inositol + phosphate. Functionally, phosphatase with broad specificity; it can dephosphorylate fructose 1,6-bisphosphate (FBP) and inositol-1-phosphate (IMP). However, while possessing a high FBPase activity in vitro, does not participate in gluconeogenesis in vivo. In Thermococcus kodakarensis (strain ATCC BAA-918 / JCM 12380 / KOD1) (Pyrococcus kodakaraensis (strain KOD1)), this protein is Fructose-1,6-bisphosphatase/inositol-1-monophosphatase (suhB).